The sequence spans 394 residues: Obg-like ATPase 1 (394 aa).

In terms of domain architecture, OBG-type G spans 25–282 (LKIGIVGLPN…MAPDEAAKYC (258 aa)). ATP contacts are provided by residues 34 to 39 (NVGKST), 56 to 60 (FCTIE), and 94 to 97 (DIAG). Mg(2+) is bound by residues S38 and T58. F129 contacts GTP. Residues 230–231 (NL), L231, and 263–265 (SGV) each bind ATP. 263-265 (SGV) is a binding site for GTP. A TGS domain is found at 303-386 (NLIYFFTAGP…QDGDIIFFKF (84 aa)).

This sequence belongs to the TRAFAC class OBG-HflX-like GTPase superfamily. OBG GTPase family. YchF/OLA1 subfamily. As to quaternary structure, monomer (Potential). Interacts with CAR4/GAP1. It depends on Mg(2+) as a cofactor.

It is found in the cytoplasm. It localises to the cytosol. Activated by GAP1. Hydrolyzes ATP, and can also hydrolyze GTP with lower efficiency. Has lower affinity for GTP (Potential). Exhibits GTPase activity. Confers sensitivity to salinity stress by suppressing the anti-oxidation enzymatic activities and increasing lipid peroxidation thus leading to the accumulation of reactive oxygen species (ROS). Acts as a negative regulator of disease resistance against bacterial pathogen. The protein is Obg-like ATPase 1 of Arabidopsis thaliana (Mouse-ear cress).